Consider the following 329-residue polypeptide: Glycerol-3-phosphate dehydrogenase [NAD(P)+] (329 aa).

Positions 15, 35, and 107 each coordinate NADPH. The sn-glycerol 3-phosphate site is built by Lys107, Gly135, and Ser137. Ala139 is an NADPH binding site. The sn-glycerol 3-phosphate site is built by Lys190, Asp243, Ser253, Arg254, and Asn255. Lys190 acts as the Proton acceptor in catalysis. Arg254 serves as a coordination point for NADPH. Residues Leu276 and Glu278 each coordinate NADPH.

The protein belongs to the NAD-dependent glycerol-3-phosphate dehydrogenase family.

The protein resides in the cytoplasm. It carries out the reaction sn-glycerol 3-phosphate + NAD(+) = dihydroxyacetone phosphate + NADH + H(+). The catalysed reaction is sn-glycerol 3-phosphate + NADP(+) = dihydroxyacetone phosphate + NADPH + H(+). It participates in membrane lipid metabolism; glycerophospholipid metabolism. In terms of biological role, catalyzes the reduction of the glycolytic intermediate dihydroxyacetone phosphate (DHAP) to sn-glycerol 3-phosphate (G3P), the key precursor for phospholipid synthesis. This chain is Glycerol-3-phosphate dehydrogenase [NAD(P)+], found in Rhodopseudomonas palustris (strain HaA2).